The following is a 456-amino-acid chain: Exodeoxyribonuclease 7 large subunit (456 aa).

The protein belongs to the XseA family. In terms of assembly, heterooligomer composed of large and small subunits.

The protein localises to the cytoplasm. It catalyses the reaction Exonucleolytic cleavage in either 5'- to 3'- or 3'- to 5'-direction to yield nucleoside 5'-phosphates.. Its function is as follows. Bidirectionally degrades single-stranded DNA into large acid-insoluble oligonucleotides, which are then degraded further into small acid-soluble oligonucleotides. This Escherichia coli (strain SE11) protein is Exodeoxyribonuclease 7 large subunit.